The primary structure comprises 153 residues: Ribonuclease H (153 aa).

The 142-residue stretch at 1–142 (MRKKIEIFTD…CDELARIAAE (142 aa)) folds into the RNase H type-1 domain. Residues Asp10, Glu48, Asp70, and Asp134 each coordinate Mg(2+).

This sequence belongs to the RNase H family. As to quaternary structure, monomer. The cofactor is Mg(2+).

Its subcellular location is the cytoplasm. The enzyme catalyses Endonucleolytic cleavage to 5'-phosphomonoester.. Its function is as follows. Endonuclease that specifically degrades the RNA of RNA-DNA hybrids. This is Ribonuclease H from Baumannia cicadellinicola subsp. Homalodisca coagulata.